Here is a 219-residue protein sequence, read N- to C-terminus: uncharacterized protein (219 aa).

The interval 70–102 (VHIGDNHPEPKNESKTQPKIESKKEPTLKQEEQ) is disordered. Residues 73–101 (GDNHPEPKNESKTQPKIESKKEPTLKQEE) show a composition bias toward basic and acidic residues. Positions 96-120 (TLKQEEQTIQAEEEAQKIAKEETRE) form a coiled coil. 3 consecutive transmembrane segments (helical) span residues 126 to 146 (GGEI…VNML), 153 to 173 (IFGL…VIVL), and 192 to 212 (TYGV…AIFF).

Its subcellular location is the membrane. This is an uncharacterized protein from Acanthamoeba polyphaga mimivirus (APMV).